Here is a 352-residue protein sequence, read N- to C-terminus: Heat-inducible transcription repressor HrcA (352 aa).

This sequence belongs to the HrcA family.

Its function is as follows. Negative regulator of class I heat shock genes (grpE-dnaK-dnaJ and groELS operons). Prevents heat-shock induction of these operons. This Prochlorococcus marinus (strain MIT 9313) protein is Heat-inducible transcription repressor HrcA.